We begin with the raw amino-acid sequence, 785 residues long: Endonuclease MutS2 (785 aa).

An ATP-binding site is contributed by 335 to 342 (GPNTGGKT). A Smr domain is found at 710 to 785 (LDLRGERYEN…GSGVTIVELK (76 aa)).

It belongs to the DNA mismatch repair MutS family. MutS2 subfamily. In terms of assembly, homodimer. Binds to stalled ribosomes, contacting rRNA.

In terms of biological role, endonuclease that is involved in the suppression of homologous recombination and thus may have a key role in the control of bacterial genetic diversity. Its function is as follows. Acts as a ribosome collision sensor, splitting the ribosome into its 2 subunits. Detects stalled/collided 70S ribosomes which it binds and splits by an ATP-hydrolysis driven conformational change. Acts upstream of the ribosome quality control system (RQC), a ribosome-associated complex that mediates the extraction of incompletely synthesized nascent chains from stalled ribosomes and their subsequent degradation. Probably generates substrates for RQC. In Bacillus velezensis (strain DSM 23117 / BGSC 10A6 / LMG 26770 / FZB42) (Bacillus amyloliquefaciens subsp. plantarum), this protein is Endonuclease MutS2.